Consider the following 78-residue polypeptide: Mandibular organ-inhibiting hormone 2 (78 aa).

Intrachain disulfides connect cysteine 7/cysteine 44, cysteine 24/cysteine 40, and cysteine 27/cysteine 53.

The protein belongs to the arthropod CHH/MIH/GIH/VIH hormone family. In terms of tissue distribution, produced by the medulla terminalis X-organ in the eyestalks and transported to the sinus gland where it is stored and released.

It is found in the secreted. Its function is as follows. Represses the synthesis of methyl farnesoate, the precursor of insect juvenile hormone III in the mandibular organ. The chain is Mandibular organ-inhibiting hormone 2 from Cancer pagurus (Rock crab).